Here is a 194-residue protein sequence, read N- to C-terminus: Probable nicotinate-nucleotide adenylyltransferase (194 aa).

It belongs to the NadD family.

It carries out the reaction nicotinate beta-D-ribonucleotide + ATP + H(+) = deamido-NAD(+) + diphosphate. It participates in cofactor biosynthesis; NAD(+) biosynthesis; deamido-NAD(+) from nicotinate D-ribonucleotide: step 1/1. Functionally, catalyzes the reversible adenylation of nicotinate mononucleotide (NaMN) to nicotinic acid adenine dinucleotide (NaAD). The polypeptide is Probable nicotinate-nucleotide adenylyltransferase (Brucella suis biovar 1 (strain 1330)).